We begin with the raw amino-acid sequence, 346 residues long: NADH-ubiquinone oxidoreductase chain 2 (346 aa).

11 helical membrane-spanning segments follow: residues 1–21 (MNPHATPVLVLSLALGTTITI), 25–45 (HWVLAWTGLEINTLAIIPLIS), 60–80 (FLTQAAASALVLFSSMTNAWA), 95–115 (CLLLTAAIAIKLGLVPFHFWF), 124–144 (LMTALLLSTLMKFPPLTLLLM), 149–169 (LNPALLTTMALASAALGGWMG), 178–195 (ILAFSSISHLGWIAIILV), 200–219 (LALLTFYLYTIMTSAVFMAL), 242–262 (ATLMLMLLSLAGLPPLTGFMP), 274–294 (EMTPAAMAIAMLSLLSLFFYL), and 326–346 (AILASLSILLLPLSPMVHAIV).

Belongs to the complex I subunit 2 family.

The protein resides in the mitochondrion inner membrane. The enzyme catalyses a ubiquinone + NADH + 5 H(+)(in) = a ubiquinol + NAD(+) + 4 H(+)(out). Core subunit of the mitochondrial membrane respiratory chain NADH dehydrogenase (Complex I) that is believed to belong to the minimal assembly required for catalysis. Complex I functions in the transfer of electrons from NADH to the respiratory chain. The immediate electron acceptor for the enzyme is believed to be ubiquinone. This chain is NADH-ubiquinone oxidoreductase chain 2 (MT-ND2), found in Mareca penelope (Eurasian wigeon).